We begin with the raw amino-acid sequence, 396 residues long: Phosphoglycerate kinase (396 aa).

Substrate contacts are provided by residues 21–23, arginine 36, 59–62, arginine 119, and arginine 156; these read DFN and HLGK. Residues lysine 206, glycine 294, glutamate 325, and 352-355 each bind ATP; that span reads GGDS.

Belongs to the phosphoglycerate kinase family. In terms of assembly, monomer.

It localises to the cytoplasm. The enzyme catalyses (2R)-3-phosphoglycerate + ATP = (2R)-3-phospho-glyceroyl phosphate + ADP. Its pathway is carbohydrate degradation; glycolysis; pyruvate from D-glyceraldehyde 3-phosphate: step 2/5. The chain is Phosphoglycerate kinase from Staphylococcus aureus (strain bovine RF122 / ET3-1).